The primary structure comprises 831 residues: Periplasmic nitrate reductase (831 aa).

Positions Met-1 to Ala-29 form a signal peptide, tat-type signal. In terms of domain architecture, 4Fe-4S Mo/W bis-MGD-type spans Ile-41–Asp-97. [4Fe-4S] cluster-binding residues include Cys-48, Cys-51, Cys-55, and Cys-83. Mo-bis(molybdopterin guanine dinucleotide) is bound by residues Lys-85, Gln-152, Asn-177, Cys-181, Trp-214–Met-221, Ser-245–His-249, Gln-264–Asp-266, Met-374, Gln-378, Asn-484, Ser-510–Asp-511, Lys-533, Asp-560, and Thr-720–Ser-729. Trp-796 contacts substrate. Mo-bis(molybdopterin guanine dinucleotide) contacts are provided by Asn-804 and Lys-821.

The protein belongs to the prokaryotic molybdopterin-containing oxidoreductase family. NasA/NapA/NarB subfamily. In terms of assembly, component of the periplasmic nitrate reductase NapAB complex composed of NapA and NapB. Requires [4Fe-4S] cluster as cofactor. The cofactor is Mo-bis(molybdopterin guanine dinucleotide). Post-translationally, predicted to be exported by the Tat system. The position of the signal peptide cleavage has not been experimentally proven.

The protein localises to the periplasm. The catalysed reaction is 2 Fe(II)-[cytochrome] + nitrate + 2 H(+) = 2 Fe(III)-[cytochrome] + nitrite + H2O. In terms of biological role, catalytic subunit of the periplasmic nitrate reductase complex NapAB. Receives electrons from NapB and catalyzes the reduction of nitrate to nitrite. The protein is Periplasmic nitrate reductase of Psychromonas ingrahamii (strain DSM 17664 / CCUG 51855 / 37).